A 344-amino-acid chain; its full sequence is tRNA dimethylallyltransferase (344 aa).

Residue 43–50 (GPTCCGKS) participates in ATP binding. 45-50 (TCCGKS) contributes to the substrate binding site. The segment at 68–71 (DSMQ) is interaction with substrate tRNA.

This sequence belongs to the IPP transferase family. In terms of assembly, monomer. It depends on Mg(2+) as a cofactor.

The enzyme catalyses adenosine(37) in tRNA + dimethylallyl diphosphate = N(6)-dimethylallyladenosine(37) in tRNA + diphosphate. Its function is as follows. Catalyzes the transfer of a dimethylallyl group onto the adenine at position 37 in tRNAs that read codons beginning with uridine, leading to the formation of N6-(dimethylallyl)adenosine (i(6)A). The polypeptide is tRNA dimethylallyltransferase (Protochlamydia amoebophila (strain UWE25)).